Here is a 1040-residue protein sequence, read N- to C-terminus: Protocadherin-10 (1040 aa).

The signal sequence occupies residues 1–18 (MIVLLLFALLWMVEGVFS). Cadherin domains are found at residues 19–122 (QLHY…PPSF), 123–250 (PEPD…VPAF), 251–358 (DQPV…APEI), 359–463 (SFST…APRF), 464–574 (SQPV…APAI), and 582–690 (NGTP…GGGG). At 19 to 715 (QLHYTVQEEQ…GGGETSLDLT (697 aa)) the chain is on the extracellular side. The segment covering 207–223 (GGGGGVGEGGGGGGGAG) has biased composition (gly residues). The tract at residues 207 to 228 (GGGGGVGEGGGGGGGAGLPPQQ) is disordered. N-linked (GlcNAc...) asparagine glycosylation is present at Asn273. Asn557 carries an N-linked (GlcNAc...) asparagine glycan. Residues 686 to 697 (QGGGGSGGGGSG) are compositionally biased toward gly residues. The tract at residues 686 to 708 (QGGGGSGGGGSGEHQRPSRSGGG) is disordered. Residues 716–736 (LILIIALGSVSFIFLLAMIVL) traverse the membrane as a helical segment. At 737 to 1040 (AVRCQKEKKL…PPYLTRKRIC (304 aa)) the chain is on the cytoplasmic side. The segment at 899–927 (AFQEADIVSSKDSGHGDSEQGDSDHDATN) is disordered. The span at 910-926 (DSGHGDSEQGDSDHDAT) shows a compositional bias: basic and acidic residues.

Moderately expressed in all regions of the brain examined, as well as in testis and ovary, and low expression in all other tissues tested.

Its subcellular location is the cell membrane. Potential calcium-dependent cell-adhesion protein. In terms of biological role, (Microbial infection) Acts as a receptor for Western equine encephalitis virus. This chain is Protocadherin-10 (PCDH10), found in Homo sapiens (Human).